The following is a 244-amino-acid chain: Yop proteins translocation lipoprotein J (244 aa).

The first 18 residues, 1–18 (MKVKTSLSTLILILFLTG), serve as a signal peptide directing secretion. Residue C19 is the site of N-palmitoyl cysteine attachment. Residue C19 is the site of S-diacylglycerol cysteine attachment. The chain crosses the membrane as a helical span at residues 218 to 238 (LIGLLSLLILLLPVTNLAQYF).

It belongs to the YscJ lipoprotein family.

It is found in the cell outer membrane. Required for the export process of the Yop proteins. This is Yop proteins translocation lipoprotein J (yscJ) from Yersinia pestis.